The sequence spans 1358 residues: DNA-directed RNA polymerase subunit beta (1358 aa).

This sequence belongs to the RNA polymerase beta chain family. The RNAP catalytic core consists of 2 alpha, 1 beta, 1 beta' and 1 omega subunit. When a sigma factor is associated with the core the holoenzyme is formed, which can initiate transcription.

The catalysed reaction is RNA(n) + a ribonucleoside 5'-triphosphate = RNA(n+1) + diphosphate. Its function is as follows. DNA-dependent RNA polymerase catalyzes the transcription of DNA into RNA using the four ribonucleoside triphosphates as substrates. This chain is DNA-directed RNA polymerase subunit beta, found in Francisella tularensis subsp. holarctica (strain LVS).